Consider the following 236-residue polypeptide: Uridylate kinase (236 aa).

10-13 (KLSG) provides a ligand contact to ATP. Gly52 contributes to the UMP binding site. 2 residues coordinate ATP: Gly53 and Arg57. Residues Asp72 and 133–140 (TGNPFFTT) contribute to the UMP site. Residues Thr160, Tyr166, and Asp169 each coordinate ATP.

The protein belongs to the UMP kinase family. As to quaternary structure, homohexamer.

It is found in the cytoplasm. The catalysed reaction is UMP + ATP = UDP + ADP. It functions in the pathway pyrimidine metabolism; CTP biosynthesis via de novo pathway; UDP from UMP (UMPK route): step 1/1. Inhibited by UTP. In terms of biological role, catalyzes the reversible phosphorylation of UMP to UDP. The sequence is that of Uridylate kinase from Bacteroides thetaiotaomicron (strain ATCC 29148 / DSM 2079 / JCM 5827 / CCUG 10774 / NCTC 10582 / VPI-5482 / E50).